The chain runs to 181 residues: Glucose-1-phosphate adenylyltransferase large subunit 2 (181 aa).

It belongs to the bacterial/plant glucose-1-phosphate adenylyltransferase family. As to quaternary structure, heterotetramer. As to expression, leaves.

Its subcellular location is the plastid. The protein resides in the chloroplast. The protein localises to the amyloplast. It carries out the reaction alpha-D-glucose 1-phosphate + ATP + H(+) = ADP-alpha-D-glucose + diphosphate. Its pathway is glycan biosynthesis; starch biosynthesis. With respect to regulation, highly active without 3'phosphoglycerate, and is only slightly affected by the activator 3'phosphoglycerate and inhibitor orthophosphate. In terms of biological role, this protein plays a role in synthesis of starch. It catalyzes the synthesis of the activated glycosyl donor, ADP-glucose from Glc-1-P and ATP. The protein is Glucose-1-phosphate adenylyltransferase large subunit 2 of Hordeum vulgare (Barley).